The sequence spans 55 residues: MRLFDPWPVFFKREWKRCWPFLTGFAVTGVLITKLTAGLTEEDAKNSKFVQQHRR.

The transit peptide at 1-11 (MRLFDPWPVFF) directs the protein to the mitochondrion. A helical membrane pass occupies residues 21–39 (FLTGFAVTGVLITKLTAGL).

The protein belongs to the ATPase 6 subunit family.

The protein localises to the mitochondrion inner membrane. Its function is as follows. Mitochondrial membrane ATP synthase (F(1)F(0) ATP synthase or Complex V) produces ATP from ADP in the presence of a proton gradient across the membrane which is generated by electron transport complexes of the respiratory chain. F-type ATPases consist of two structural domains, F(1) - containing the extramembraneous catalytic core and F(0) - containing the membrane proton channel, linked together by a central stalk and a peripheral stalk. During catalysis, ATP synthesis in the catalytic domain of F(1) is coupled via a rotary mechanism of the central stalk subunits to proton translocation. Part of the complex F(0) domain. Confers tolerance to several abiotic stresses (e.g. salt, mannitol, drought, oxidative and cold stresses), probably by providing additional energy needed for cell homeostasis. This is ATP synthase small subunit 6-A, mitochondrial from Arabidopsis thaliana (Mouse-ear cress).